A 256-amino-acid chain; its full sequence is UPF0246 protein TERTU_4575 (256 aa).

Belongs to the UPF0246 family.

This Teredinibacter turnerae (strain ATCC 39867 / T7901) protein is UPF0246 protein TERTU_4575.